We begin with the raw amino-acid sequence, 60 residues long: Large ribosomal subunit protein uL30 (60 aa).

Belongs to the universal ribosomal protein uL30 family. In terms of assembly, part of the 50S ribosomal subunit.

The sequence is that of Large ribosomal subunit protein uL30 from Streptococcus thermophilus (strain CNRZ 1066).